A 44-amino-acid chain; its full sequence is U4-ctenitoxin-Pk1a (44 aa).

Disulfide bonds link C4/C18, C11/C24, C15/C42, C17/C33, and C26/C31.

Expressed by the venom gland.

Its subcellular location is the secreted. Functionally, neurotoxin. Causes spastic paralysis and death in mice within 10 minutes at dose levels of 3 ug per mouse. This Phoneutria keyserlingi (Brazilian wandering spider) protein is U4-ctenitoxin-Pk1a.